Here is a 350-residue protein sequence, read N- to C-terminus: Putative ankyrin repeat protein RBE_0589 (350 aa).

ANK repeat units follow at residues 81 to 110 (DGFTLLHKSINERDYNIAGFLLERKANPNI), 114 to 151 (DIVTPLNRIAGKPLSKTEEDFHMAKLLLQKGALTEPTD), and 153 to 182 (SGWTPIQYAVFNEKIGIVELLIDYGANLDI).

This is Putative ankyrin repeat protein RBE_0589 from Rickettsia bellii (strain RML369-C).